A 240-amino-acid polypeptide reads, in one-letter code: Large ribosomal subunit protein uL3 (240 aa).

2 disordered regions span residues 139-164 (VSHRSIGSTGGRQDPGKTFKNKKMPG) and 215-240 (DAPKPGKFRLADGGEQAAPAAEQEGV). Q151 bears the N5-methylglutamine mark. The span at 225–240 (ADGGEQAAPAAEQEGV) shows a compositional bias: low complexity.

The protein belongs to the universal ribosomal protein uL3 family. As to quaternary structure, part of the 50S ribosomal subunit. Forms a cluster with proteins L14 and L19. Post-translationally, methylated by PrmB.

One of the primary rRNA binding proteins, it binds directly near the 3'-end of the 23S rRNA, where it nucleates assembly of the 50S subunit. This chain is Large ribosomal subunit protein uL3, found in Rhodopseudomonas palustris (strain BisA53).